The chain runs to 90 residues: Small ribosomal subunit protein uS17 (90 aa).

It belongs to the universal ribosomal protein uS17 family. As to quaternary structure, part of the 30S ribosomal subunit.

Its function is as follows. One of the primary rRNA binding proteins, it binds specifically to the 5'-end of 16S ribosomal RNA. The polypeptide is Small ribosomal subunit protein uS17 (Burkholderia cenocepacia (strain ATCC BAA-245 / DSM 16553 / LMG 16656 / NCTC 13227 / J2315 / CF5610) (Burkholderia cepacia (strain J2315))).